The sequence spans 309 residues: Porphobilinogen deaminase (309 aa).

Cysteine 244 carries the S-(dipyrrolylmethanemethyl)cysteine modification.

Belongs to the HMBS family. As to quaternary structure, monomer. Dipyrromethane serves as cofactor.

It catalyses the reaction 4 porphobilinogen + H2O = hydroxymethylbilane + 4 NH4(+). Its pathway is porphyrin-containing compound metabolism; protoporphyrin-IX biosynthesis; coproporphyrinogen-III from 5-aminolevulinate: step 2/4. Its function is as follows. Tetrapolymerization of the monopyrrole PBG into the hydroxymethylbilane pre-uroporphyrinogen in several discrete steps. The polypeptide is Porphobilinogen deaminase (Rhizobium meliloti (strain 1021) (Ensifer meliloti)).